A 114-amino-acid polypeptide reads, in one-letter code: Large ribosomal subunit protein bL19 (114 aa).

It belongs to the bacterial ribosomal protein bL19 family.

Functionally, this protein is located at the 30S-50S ribosomal subunit interface and may play a role in the structure and function of the aminoacyl-tRNA binding site. This is Large ribosomal subunit protein bL19 from Thermobifida fusca (strain YX).